The primary structure comprises 449 residues: G-protein coupled receptor 61 (449 aa).

Over residues 1–14 (MESSPIPQSSGNSS) the composition is skewed to low complexity. Residues 1–29 (MESSPIPQSSGNSSTLGRALQTPGPSTAS) form a disordered region. Topologically, residues 1 to 44 (MESSPIPQSSGNSSTLGRALQTPGPSTASGVPELGLRDVASESV) are extracellular. N-linked (GlcNAc...) asparagine glycosylation is present at asparagine 12. Residues 45–67 (ALFFMLLLDLTAVAGNAAVMAVI) traverse the membrane as a helical segment. The Cytoplasmic segment spans residues 68–75 (AKTPALRK). The chain crosses the membrane as a helical span at residues 76 to 98 (FVFVFHLCLVDLLAALTLMPLAM). Residues 99–112 (LSSSALFDHALFGE) lie on the Extracellular side of the membrane. Residues 113–135 (VACRLYLFLSVCFVSLAILSVSA) traverse the membrane as a helical segment. Over 136–155 (INVERYYYVVHPMRYEVRMT) the chain is Cytoplasmic. Residues 156-178 (LGLVASVLVGVWVKALAMASVPV) traverse the membrane as a helical segment. Residues 179-206 (LGRVYWEEGAPSVNPGCSLQWSHSAYCQ) lie on the Extracellular side of the membrane. A helical transmembrane segment spans residues 207 to 229 (LFVVVFAVLYFLLPLILIFVVYC). The Cytoplasmic segment spans residues 230 to 287 (SMFRVARVAAMQHGPLPTWMETPRQRSESLSSRSTMVTSSGAHQTTPHRTFGGGKAAV). Residues 288–310 (VLLAVGGQFLLCWLPYFSFHLYV) form a helical membrane-spanning segment. Residues 311–324 (ALSAQPISAGQVEN) are Extracellular-facing. Residues 325–344 (VVTWIGYFCFTSNPFFYGCL) traverse the membrane as a helical segment. At 345–449 (NRQIRGELSK…RPAPSPRLES (105 aa)) the chain is on the cytoplasmic side.

This sequence belongs to the G-protein coupled receptor 1 family. In terms of assembly, forms heterodimer with MTNR1B. Interacts with ARRB1 and ARRB2 in a spontaneous and agonist-independent manner; leading to the internalization of GPR61 in the endosomal compartment. As to expression, predominantly expressed in the brain and testes, with relatively lower expression observed in the eye, adrenal gland and pituitary gland.

The protein localises to the cell membrane. It localises to the endosome membrane. In terms of biological role, orphan G-protein coupled receptor. Constitutively activates the G(s)-alpha/cAMP signaling pathway. Shows a reciprocal regulatory interaction with the melatonin receptor MTNR1B most likely through receptor heteromerization. May be involved in the regulation of food intake and body weight. The polypeptide is G-protein coupled receptor 61 (Gpr61) (Mus musculus (Mouse)).